The chain runs to 118 residues: Small ribosomal subunit protein uS13 (118 aa).

A disordered region spans residues 95–118; it reads LPLRGQRTRTNARTRKGPRKAIKK.

The protein belongs to the universal ribosomal protein uS13 family. As to quaternary structure, part of the 30S ribosomal subunit. Forms a loose heterodimer with protein S19. Forms two bridges to the 50S subunit in the 70S ribosome.

Functionally, located at the top of the head of the 30S subunit, it contacts several helices of the 16S rRNA. In the 70S ribosome it contacts the 23S rRNA (bridge B1a) and protein L5 of the 50S subunit (bridge B1b), connecting the 2 subunits; these bridges are implicated in subunit movement. Contacts the tRNAs in the A and P-sites. The sequence is that of Small ribosomal subunit protein uS13 from Xylella fastidiosa (strain 9a5c).